A 38-amino-acid chain; its full sequence is EVKYDPCFGHKIDRINHVSNLGCPSLRDPRPNAPSTSA.

A disulfide bridge connects residues Cys7 and Cys23. The segment at 19 to 38 (SNLGCPSLRDPRPNAPSTSA) is disordered.

Belongs to the natriuretic peptide family. In terms of tissue distribution, expressed by the venom gland.

It localises to the secreted. Functionally, exhibits vasodilator, natriuretic and diuretic properties in animal models and human tissues. Acts by stimulating cGMP via the natriuretic peptide receptor 1 (NPR1). Is a poor agonist of the atrial natriuretic peptide receptor 2 (NPR2). Is not degraded by neutral endopeptidase (NEP/MME). Binds to atrial natriuretic peptide clearance receptor (NPR-C/NPR3), which may be responsible of the removal of DNP from the circulation. Increases calcium uptake and induces histamine release from rat peritoneal mast cells. Increases calcium-activated potassium (KCa) current in gastric antral circular smooth muscle cells by increasing cGMP production and activating inositol trisphosphate receptors (IP3Rs). In vivo, reduces both systolic and diastolic blood pressure with no effect on heart rate, when intravenously injected in conscious rabbits. In Dendroaspis angusticeps (Eastern green mamba), this protein is Natriuretic peptide DNP.